The following is a 407-amino-acid chain: Serine hydroxymethyltransferase (407 aa).

(6S)-5,6,7,8-tetrahydrofolate is bound by residues L117 and 121-123 (GHL). K226 carries the N6-(pyridoxal phosphate)lysine modification. A (6S)-5,6,7,8-tetrahydrofolate-binding site is contributed by E242.

The protein belongs to the SHMT family. In terms of assembly, homodimer. Pyridoxal 5'-phosphate serves as cofactor.

It is found in the cytoplasm. It catalyses the reaction (6R)-5,10-methylene-5,6,7,8-tetrahydrofolate + glycine + H2O = (6S)-5,6,7,8-tetrahydrofolate + L-serine. It functions in the pathway one-carbon metabolism; tetrahydrofolate interconversion. Its pathway is amino-acid biosynthesis; glycine biosynthesis; glycine from L-serine: step 1/1. In terms of biological role, catalyzes the reversible interconversion of serine and glycine with tetrahydrofolate (THF) serving as the one-carbon carrier. This reaction serves as the major source of one-carbon groups required for the biosynthesis of purines, thymidylate, methionine, and other important biomolecules. Also exhibits THF-independent aldolase activity toward beta-hydroxyamino acids, producing glycine and aldehydes, via a retro-aldol mechanism. The chain is Serine hydroxymethyltransferase from Thermus thermophilus (strain ATCC BAA-163 / DSM 7039 / HB27).